Here is a 185-residue protein sequence, read N- to C-terminus: Probable chorismate pyruvate-lyase (185 aa).

The substrate site is built by Arg-75, Leu-113, and Glu-174.

Belongs to the UbiC family.

It localises to the cytoplasm. The enzyme catalyses chorismate = 4-hydroxybenzoate + pyruvate. It functions in the pathway cofactor biosynthesis; ubiquinone biosynthesis. Functionally, removes the pyruvyl group from chorismate, with concomitant aromatization of the ring, to provide 4-hydroxybenzoate (4HB) for the ubiquinone pathway. In Aromatoleum aromaticum (strain DSM 19018 / LMG 30748 / EbN1) (Azoarcus sp. (strain EbN1)), this protein is Probable chorismate pyruvate-lyase.